Here is a 317-residue protein sequence, read N- to C-terminus: MYTKIIGTGSYLPEQVRTNADLEKMVETSDEWIVTRTGIRERHIAAPNETVATMGYTAANRALEMAGIDKDQIGLIVVATTSATHAFPSAACQIQSMLGIKGCPAFDVAAACAGFTYALSVADQYVKSGAVKYALVIGSDVLARTCDPTDRGTIIIFGDGAGAAVLSASEEPGIISTHLHADGSYGELLTLPNADRVNPENPIYLTMAGNEVFKVAVTELAHIVDETLAANNLDRSALDWLVPHQANLRIISATAKKLGMSMDNVVVTLDRHGNTSAASVPCALDEAVRDGRIKAGQLVLLEAFGGGFTWGSALVRF.

Catalysis depends on residues C112 and H244. Positions 245–249 are ACP-binding; it reads QANLR. N274 is a catalytic residue.

The protein belongs to the thiolase-like superfamily. FabH family. Homodimer.

The protein resides in the cytoplasm. It catalyses the reaction malonyl-[ACP] + acetyl-CoA + H(+) = 3-oxobutanoyl-[ACP] + CO2 + CoA. Its pathway is lipid metabolism; fatty acid biosynthesis. Its function is as follows. Catalyzes the condensation reaction of fatty acid synthesis by the addition to an acyl acceptor of two carbons from malonyl-ACP. Catalyzes the first condensation reaction which initiates fatty acid synthesis and may therefore play a role in governing the total rate of fatty acid production. Possesses both acetoacetyl-ACP synthase and acetyl transacylase activities. Its substrate specificity determines the biosynthesis of branched-chain and/or straight-chain of fatty acids. The polypeptide is Beta-ketoacyl-[acyl-carrier-protein] synthase III (Citrobacter koseri (strain ATCC BAA-895 / CDC 4225-83 / SGSC4696)).